Here is an 88-residue protein sequence, read N- to C-terminus: Small ribosomal subunit protein bS16c (88 aa).

The protein belongs to the bacterial ribosomal protein bS16 family.

It is found in the plastid. The protein localises to the chloroplast. This is Small ribosomal subunit protein bS16c from Gossypium hirsutum (Upland cotton).